The sequence spans 105 residues: Thioredoxin (105 aa).

The Thioredoxin domain maps to Met1 to Ile105. A disulfide bond links Cys29 and Cys32.

The protein belongs to the thioredoxin family.

Participates in various redox reactions through the reversible oxidation of its active center dithiol to a disulfide and catalyzes dithiol-disulfide exchange reactions. In Acetoanaerobium sticklandii (strain ATCC 12662 / DSM 519 / JCM 1433 / CCUG 9281 / NCIMB 10654 / HF) (Clostridium sticklandii), this protein is Thioredoxin (trxA).